A 379-amino-acid polypeptide reads, in one-letter code: Cytochrome b (379 aa).

The next 4 membrane-spanning stretches (helical) occupy residues 34–54, 78–100, 113–133, and 179–199; these read YGSL…MLAM, WMIR…VHIG, TWNI…LGYV, and FFSL…IHLL. The heme b site is built by H84 and H98. Residues H183 and H197 each contribute to the heme b site. H202 provides a ligand contact to a ubiquinone. 4 helical membrane-spanning segments follow: residues 225–245, 289–309, 320–340, and 345–365; these read FSIK…FLVL, LGGV…PIFS, WSGM…WIGA, and APYI…FFWM.

This sequence belongs to the cytochrome b family. As to quaternary structure, the main subunits of complex b-c1 are: cytochrome b, cytochrome c1 and the Rieske protein. Heme b serves as cofactor.

The protein localises to the mitochondrion inner membrane. Functionally, component of the ubiquinol-cytochrome c reductase complex (complex III or cytochrome b-c1 complex) that is part of the mitochondrial respiratory chain. The b-c1 complex mediates electron transfer from ubiquinol to cytochrome c. Contributes to the generation of a proton gradient across the mitochondrial membrane that is then used for ATP synthesis. This is Cytochrome b (mt:Cyt-b) from Epiperipatus biolleyi (Velvet worm).